Consider the following 107-residue polypeptide: uncharacterized protein (107 aa).

This is an uncharacterized protein from Homo sapiens (Human).